The sequence spans 550 residues: uncharacterized protein (550 aa).

A signal peptide spans 1 to 53 (MVVIANKGALWAYYCKRLLNSVTYMMYPLIRKRTMKKLLLIVGLLLACSTVMR). N-linked (GlcNAc...) asparagine glycans are attached at residues asparagine 296 and asparagine 518.

The protein resides in the endoplasmic reticulum. This is an uncharacterized protein from Schizosaccharomyces pombe (strain 972 / ATCC 24843) (Fission yeast).